The chain runs to 502 residues: ATP synthase subunit alpha (502 aa).

169-176 (GDRQTGKT) contacts ATP.

This sequence belongs to the ATPase alpha/beta chains family. In terms of assembly, F-type ATPases have 2 components, CF(1) - the catalytic core - and CF(0) - the membrane proton channel. CF(1) has five subunits: alpha(3), beta(3), gamma(1), delta(1), epsilon(1). CF(0) has three main subunits: a(1), b(2) and c(9-12). The alpha and beta chains form an alternating ring which encloses part of the gamma chain. CF(1) is attached to CF(0) by a central stalk formed by the gamma and epsilon chains, while a peripheral stalk is formed by the delta and b chains.

The protein localises to the cell inner membrane. It catalyses the reaction ATP + H2O + 4 H(+)(in) = ADP + phosphate + 5 H(+)(out). In terms of biological role, produces ATP from ADP in the presence of a proton gradient across the membrane. The alpha chain is a regulatory subunit. The sequence is that of ATP synthase subunit alpha from Nitratidesulfovibrio vulgaris (strain ATCC 29579 / DSM 644 / CCUG 34227 / NCIMB 8303 / VKM B-1760 / Hildenborough) (Desulfovibrio vulgaris).